The chain runs to 69 residues: Small archaeal modifier protein 2 (69 aa).

Lys-55 participates in a covalent cross-link: Glycyl lysine isopeptide (Lys-Gly) (interchain with G-Cter in SAMP2). Position 69 is a 1-thioglycine; alternate (Gly-69). The residue at position 69 (Gly-69) is a Glycyl adenylate; alternate. A Glycyl lysine isopeptide (Gly-Lys) (interchain with K-? in acceptor proteins); alternate cross-link involves residue Gly-69.

The C-terminal glycine is likely acyl-adenylated (-COAMP) by UbaA, and also probably thiocarboxylated (-COSH) to function in sulfur transfer.

Its function is as follows. Functions as a protein modifier covalently attached to lysine residues of substrate proteins, as well as a sulfur carrier in tRNA thiolation. The protein modification process is termed sampylation and involves the formation of an isopeptide bond between the SAMP2 C-terminal glycine carboxylate and the epsilon-amino group of lysine residues on target proteins. Is able to form polymeric chains with itself likely at Lys-55, similar to ubiquitin and other ubiquitin-like proteins. May serve as a proteolytic signal in the cell to target proteins for degradation by proteasomes. This is Small archaeal modifier protein 2 from Pyrococcus furiosus (strain ATCC 43587 / DSM 3638 / JCM 8422 / Vc1).